Here is a 287-residue protein sequence, read N- to C-terminus: Arylamine N-acetyltransferase, liver isozyme (287 aa).

Residue cysteine 68 is the Acyl-thioester intermediate of the active site. Residues histidine 107 and aspartate 122 contribute to the active site.

The protein belongs to the arylamine N-acetyltransferase family.

The catalysed reaction is an arylamine + acetyl-CoA = an N-acetylarylamine + CoA. The protein is Arylamine N-acetyltransferase, liver isozyme of Gallus gallus (Chicken).